The sequence spans 554 residues: Suppressor of hairless homolog (554 aa).

Positions M1–N31 are disordered. DNA-binding regions lie at residues K83–R90, R218–R227, and R291–Y323. In terms of domain architecture, IPT/TIG spans P381–T471. A disordered region spans residues G489 to S554. Residues D508 to D519 show a composition bias toward basic and acidic residues.

It belongs to the Su(H) family. Interacts with activated Notch proteins.

It is found in the nucleus. Its function is as follows. Transcriptional regulator that plays a central role in Notch signaling, a signaling pathway involved in cell-cell communication that regulates a broad spectrum of cell-fate determinations. Acts as a transcriptional repressor when it is not associated with Notch proteins. When associated with some Notch protein, it acts as a transcriptional activator that activates transcription of Notch target genes. Required for the transcriptional expression of Brachyury, suggesting that it participates in notochord differentiation. The polypeptide is Suppressor of hairless homolog (Su(H)) (Ciona intestinalis (Transparent sea squirt)).